The chain runs to 563 residues: Glucocorticoid modulatory element-binding protein 1 (563 aa).

Ala-2 bears the N-acetylalanine mark. An SAND domain is found at 72–156 (ASTIEANEDM…RKMMDSGQID (85 aa)). Cys-103 contacts Zn(2+). DNA-binding residues include Lys-129, Lys-133, Lys-136, and Arg-147. Residues His-160, Cys-164, and Cys-168 each contribute to the Zn(2+) site. The stretch at 304 to 355 (MDTVKKVLDNRKNQVEQGEEQFLYTLTDLERQLEEQKKQAQDHRLKSQTVQN) forms a coiled coil. Positions 360–385 (PVSTPKPPKRPRLQRPASTTVLSPSP) are disordered.

As to quaternary structure, homodimer, and heterodimer of GMEB1 and GMEB2. Interacts with TRIM63. Interacts with the glucocorticoid receptor (NR3C1) and NCOA2/TIF2. May interact with HSP27 and CREB-binding protein (CBP).

The protein localises to the nucleus. It is found in the cytoplasm. Trans-acting factor that binds to glucocorticoid modulatory elements (GME) present in the TAT (tyrosine aminotransferase) promoter and increases sensitivity to low concentrations of glucocorticoids. Also binds to the transferrin receptor promoter. In Bos taurus (Bovine), this protein is Glucocorticoid modulatory element-binding protein 1 (GMEB1).